Reading from the N-terminus, the 147-residue chain is 2-amino-4-hydroxy-6-hydroxymethyldihydropteridine pyrophosphokinase (147 aa).

The protein belongs to the HPPK family.

The catalysed reaction is 6-hydroxymethyl-7,8-dihydropterin + ATP = (7,8-dihydropterin-6-yl)methyl diphosphate + AMP + H(+). The protein operates within cofactor biosynthesis; tetrahydrofolate biosynthesis; 2-amino-4-hydroxy-6-hydroxymethyl-7,8-dihydropteridine diphosphate from 7,8-dihydroneopterin triphosphate: step 4/4. Its function is as follows. Catalyzes the transfer of pyrophosphate from adenosine triphosphate (ATP) to 6-hydroxymethyl-7,8-dihydropterin, an enzymatic step in folate biosynthesis pathway. The polypeptide is 2-amino-4-hydroxy-6-hydroxymethyldihydropteridine pyrophosphokinase (folK) (Porphyromonas gingivalis (strain ATCC 33277 / DSM 20709 / CIP 103683 / JCM 12257 / NCTC 11834 / 2561)).